An 87-amino-acid chain; its full sequence is Phosphoribosyl-ATP pyrophosphatase (87 aa).

Belongs to the PRA-PH family.

Its subcellular location is the cytoplasm. It carries out the reaction 1-(5-phospho-beta-D-ribosyl)-ATP + H2O = 1-(5-phospho-beta-D-ribosyl)-5'-AMP + diphosphate + H(+). The protein operates within amino-acid biosynthesis; L-histidine biosynthesis; L-histidine from 5-phospho-alpha-D-ribose 1-diphosphate: step 2/9. The sequence is that of Phosphoribosyl-ATP pyrophosphatase from Arthrobacter sp. (strain FB24).